A 352-amino-acid polypeptide reads, in one-letter code: tRNA(Ile)-lysidine synthase (352 aa).

58–63 provides a ligand contact to ATP; it reads SGGADS.

Belongs to the tRNA(Ile)-lysidine synthase family.

It localises to the cytoplasm. The enzyme catalyses cytidine(34) in tRNA(Ile2) + L-lysine + ATP = lysidine(34) in tRNA(Ile2) + AMP + diphosphate + H(+). Its function is as follows. Ligates lysine onto the cytidine present at position 34 of the AUA codon-specific tRNA(Ile) that contains the anticodon CAU, in an ATP-dependent manner. Cytidine is converted to lysidine, thus changing the amino acid specificity of the tRNA from methionine to isoleucine. The polypeptide is tRNA(Ile)-lysidine synthase (Streptomyces coelicolor (strain ATCC BAA-471 / A3(2) / M145)).